The sequence spans 361 residues: Peptide chain release factor 1 (361 aa).

Gln237 is subject to N5-methylglutamine. Positions 286-306 (AKQDQEQAAKRKSLVGSGDRS) are disordered.

This sequence belongs to the prokaryotic/mitochondrial release factor family. Methylated by PrmC. Methylation increases the termination efficiency of RF1.

The protein resides in the cytoplasm. Its function is as follows. Peptide chain release factor 1 directs the termination of translation in response to the peptide chain termination codons UAG and UAA. This Coxiella burnetii (strain CbuK_Q154) (Coxiella burnetii (strain Q154)) protein is Peptide chain release factor 1.